The sequence spans 570 residues: Glutamate--tRNA ligase (570 aa).

Positions 107–117 (PNPDFVLHLGS) match the 'HIGH' region motif.

This sequence belongs to the class-I aminoacyl-tRNA synthetase family. Glutamate--tRNA ligase type 2 subfamily.

The protein resides in the cytoplasm. The catalysed reaction is tRNA(Glu) + L-glutamate + ATP = L-glutamyl-tRNA(Glu) + AMP + diphosphate. Functionally, catalyzes the attachment of glutamate to tRNA(Glu) in a two-step reaction: glutamate is first activated by ATP to form Glu-AMP and then transferred to the acceptor end of tRNA(Glu). The polypeptide is Glutamate--tRNA ligase (Pyrobaculum calidifontis (strain DSM 21063 / JCM 11548 / VA1)).